We begin with the raw amino-acid sequence, 474 residues long: tRNA-2-methylthio-N(6)-dimethylallyladenosine synthase (474 aa).

Positions 3–120 (KKLHIKTWGC…LPDMIEQVRR (118 aa)) constitute an MTTase N-terminal domain. Residues Cys-12, Cys-49, Cys-83, Cys-157, Cys-161, and Cys-164 each coordinate [4Fe-4S] cluster. In terms of domain architecture, Radical SAM core spans 143 to 375 (RAEGPTAFVS…QDRITQQAMR (233 aa)). The 64-residue stretch at 378-441 (RHMMGTVQRI…TNSLRGKFIR (64 aa)) folds into the TRAM domain.

The protein belongs to the methylthiotransferase family. MiaB subfamily. As to quaternary structure, monomer. [4Fe-4S] cluster serves as cofactor.

Its subcellular location is the cytoplasm. It carries out the reaction N(6)-dimethylallyladenosine(37) in tRNA + (sulfur carrier)-SH + AH2 + 2 S-adenosyl-L-methionine = 2-methylsulfanyl-N(6)-dimethylallyladenosine(37) in tRNA + (sulfur carrier)-H + 5'-deoxyadenosine + L-methionine + A + S-adenosyl-L-homocysteine + 2 H(+). Functionally, catalyzes the methylthiolation of N6-(dimethylallyl)adenosine (i(6)A), leading to the formation of 2-methylthio-N6-(dimethylallyl)adenosine (ms(2)i(6)A) at position 37 in tRNAs that read codons beginning with uridine. The polypeptide is tRNA-2-methylthio-N(6)-dimethylallyladenosine synthase (Shewanella sp. (strain MR-4)).